A 141-amino-acid chain; its full sequence is ATP synthase epsilon chain (141 aa).

The protein belongs to the ATPase epsilon chain family. F-type ATPases have 2 components, CF(1) - the catalytic core - and CF(0) - the membrane proton channel. CF(1) has five subunits: alpha(3), beta(3), gamma(1), delta(1), epsilon(1). CF(0) has three main subunits: a, b and c.

The protein resides in the cell inner membrane. In terms of biological role, produces ATP from ADP in the presence of a proton gradient across the membrane. The protein is ATP synthase epsilon chain of Pseudomonas fluorescens (strain Pf0-1).